The primary structure comprises 287 residues: Small ribosomal subunit protein uS2 (287 aa).

Residues 254 to 277 are compositionally biased toward low complexity; that stretch reads LASATASATPSATASTTALTDAPA. Positions 254–287 are disordered; that stretch reads LASATASATPSATASTTALTDAPAGATEPTTDAS.

It belongs to the universal ribosomal protein uS2 family.

The polypeptide is Small ribosomal subunit protein uS2 (rpsB) (Mycobacterium tuberculosis (strain CDC 1551 / Oshkosh)).